A 257-amino-acid chain; its full sequence is Acetylglutamate kinase (257 aa).

Substrate-binding positions include 43 to 44 (GG), Arg-65, and Asn-157. Residues 180–185 (DVSGIL) and 208–210 (IIT) each bind ATP.

The protein belongs to the acetylglutamate kinase family. ArgB subfamily. Homodimer.

Its subcellular location is the cytoplasm. It catalyses the reaction N-acetyl-L-glutamate + ATP = N-acetyl-L-glutamyl 5-phosphate + ADP. It participates in amino-acid biosynthesis; L-arginine biosynthesis; N(2)-acetyl-L-ornithine from L-glutamate: step 2/4. Catalyzes the ATP-dependent phosphorylation of N-acetyl-L-glutamate. This Escherichia coli O139:H28 (strain E24377A / ETEC) protein is Acetylglutamate kinase.